Here is a 318-residue protein sequence, read N- to C-terminus: MTLSAWFVAFLLDHWLGDPPRWPHPVRWMGNLITLLQRAIRTLCHSEWALKWGGAVLWLLVVGITWLVSWGFLWLMTEINPWLGWLAQVWMIYTLLAGRCLSDAALAVFDALQHGTLAQSREKLSWIVGRDTSQLEKPQITRAVVETVAENSVDGVIAPLFFLMLGGAPLAMAYKAVNTLDSMVGYKTPKYRAIGYMSARMDDLANWLPARLSWVLLSAAAWLIQADYRQALRIGWRDRYQHSSPNCAWSEATVAGALGIRLGGPNDYCGERVEKPWIGDERREVALSDIPRSIHLMMMASLLALLLFALTHLLLVGI.

5 consecutive transmembrane segments (helical) span residues 56 to 76, 78 to 98, 153 to 173, 204 to 224, and 298 to 318; these read VLWL…LWLM, EINP…LLAG, VDGV…LAMA, LANW…AWLI, and MMAS…LVGI.

It belongs to the CobD/CbiB family.

The protein localises to the cell membrane. It functions in the pathway cofactor biosynthesis; adenosylcobalamin biosynthesis. Converts cobyric acid to cobinamide by the addition of aminopropanol on the F carboxylic group. This chain is Cobalamin biosynthesis protein CobD, found in Yersinia enterocolitica serotype O:8 / biotype 1B (strain NCTC 13174 / 8081).